Consider the following 603-residue polypeptide: Elongation factor 4 (603 aa).

In terms of domain architecture, tr-type G spans 7 to 191 (SNIRNFSIVA…AIVTRLPPPK (185 aa)). GTP is bound by residues 19 to 24 (DHGKST) and 138 to 141 (NKVD).

It belongs to the TRAFAC class translation factor GTPase superfamily. Classic translation factor GTPase family. LepA subfamily.

Its subcellular location is the cell inner membrane. It catalyses the reaction GTP + H2O = GDP + phosphate + H(+). Functionally, required for accurate and efficient protein synthesis under certain stress conditions. May act as a fidelity factor of the translation reaction, by catalyzing a one-codon backward translocation of tRNAs on improperly translocated ribosomes. Back-translocation proceeds from a post-translocation (POST) complex to a pre-translocation (PRE) complex, thus giving elongation factor G a second chance to translocate the tRNAs correctly. Binds to ribosomes in a GTP-dependent manner. In Bradyrhizobium diazoefficiens (strain JCM 10833 / BCRC 13528 / IAM 13628 / NBRC 14792 / USDA 110), this protein is Elongation factor 4.